The following is a 102-amino-acid chain: Small ribosomal subunit protein uS10 (102 aa).

This sequence belongs to the universal ribosomal protein uS10 family. Part of the 30S ribosomal subunit.

Its function is as follows. Involved in the binding of tRNA to the ribosomes. This Methanocorpusculum labreanum (strain ATCC 43576 / DSM 4855 / Z) protein is Small ribosomal subunit protein uS10.